A 223-amino-acid polypeptide reads, in one-letter code: DNA mismatch repair protein MutH (223 aa).

It belongs to the MutH family.

Its subcellular location is the cytoplasm. Sequence-specific endonuclease that cleaves unmethylated GATC sequences. It is involved in DNA mismatch repair. This is DNA mismatch repair protein MutH from Haemophilus influenzae (strain ATCC 51907 / DSM 11121 / KW20 / Rd).